The chain runs to 276 residues: Bis(5'-nucleosyl)-tetraphosphatase, symmetrical (276 aa).

Belongs to the Ap4A hydrolase family.

It carries out the reaction P(1),P(4)-bis(5'-adenosyl) tetraphosphate + H2O = 2 ADP + 2 H(+). Functionally, hydrolyzes diadenosine 5',5'''-P1,P4-tetraphosphate to yield ADP. This chain is Bis(5'-nucleosyl)-tetraphosphatase, symmetrical, found in Legionella pneumophila subsp. pneumophila (strain Philadelphia 1 / ATCC 33152 / DSM 7513).